We begin with the raw amino-acid sequence, 248 residues long: Chromatin target of PRMT1 protein (248 aa).

N-acetylalanine is present on Ala2. Ser40, Ser49, and Ser64 each carry phosphoserine. Lys70 participates in a covalent cross-link: Glycyl lysine isopeptide (Lys-Gly) (interchain with G-Cter in SUMO2). A disordered region spans residues 151-204 (LRRGGVRGRGGPGRGGLGRGAMGRGGIGGRGRGMIGRGRGGFGGRGRGRGRGRG). The interaction with PRMT1 stretch occupies residues 153–206 (RGGVRGRGGPGRGGLGRGAMGRGGIGGRGRGMIGRGRGGFGGRGRGRGRGRGAL). Residues 157-195 (RGRGGPGRGGLGRGAMGRGGIGGRGRGMIGRGRGGFGGR) show a composition bias toward gly residues. The GAR motif; involved in 5hmC binding signature appears at 194–203 (GRGRGRGRGR). The residue at position 242 (Thr242) is a Phosphothreonine.

In terms of assembly, interacts with PRMT1 and PRMT5. Interacts with the 5FMC complex; the interaction is methylation-dependent. Interacts with FYTTD1, SET and PRC1 complex members CBX4, RNF2 and PHC2; the interactions are methylation-independent. Interacts with ZNF148. Interacts with WDR77 and ER. Post-translationally, asymmetrically methylated by PRMT1. Symmetrically methylated by PRMT5.

It localises to the nucleus. It is found in the nucleolus. Its subcellular location is the nucleoplasm. The protein localises to the nucleus speckle. Functionally, plays an important role in the ligand-dependent activation of estrogen receptor target genes. May play a role in the silencing of fetal globin genes. Recruits the 5FMC complex to ZNF148, leading to desumoylation of ZNF148 and subsequent transactivation of ZNF148 target genes. Required for the tumorigenicity of glioblastoma cells. Binds to 5-hydroxymethylcytosine (5hmC) and associates with the methylosome complex containing PRMT1, PRMT5, MEP50 and ERH. The CHTOP-methylosome complex associated with 5hmC methylates H4R3 and transactivates genes involved in glioblastomagenesis. The sequence is that of Chromatin target of PRMT1 protein (Chtop) from Rattus norvegicus (Rat).